A 170-amino-acid chain; its full sequence is Calcineurin subunit B type 1 (170 aa).

Gly-2 carries N-myristoyl glycine lipidation. 4 consecutive EF-hand domains span residues 18 to 46, 50 to 85, 87 to 122, and 128 to 163; these read DEIK…FMSL, QQNP…FSVK, DKEQ…MVGN, and QLQQ…LDIH. Positions 31, 33, 35, 37, 42, 63, 65, 67, 69, 74, 100, 102, 104, 106, and 111 each coordinate Ca(2+). Tyr-106 carries the post-translational modification Phosphotyrosine. The calcineurin A binding stretch occupies residues 131–136; it reads QIVDKT. The Ca(2+) site is built by Asp-141, Asp-143, Asp-145, Arg-147, and Glu-152.

It belongs to the calcineurin regulatory subunit family. Forms a complex composed of a calmodulin-dependent catalytic subunit (also known as calcineurin A) and a regulatory Ca(2+)-binding subunit (also known as calcineurin B). There are three catalytic subunits, each encoded by a separate gene (PPP3CA, PPP3CB, and PPP3CC) and two regulatory subunits which are also encoded by separate genes (PPP3R1 and PPP3R2). The interaction between the 2 subunits is Ca(2+)-independent. Interacts with catalytic subunit PPP3CA/calcineurin A. Interacts with catalytic subunit PPP3CB/calcineurin A. Interacts with CIB1 (via C-terminal region); the interaction increases upon cardiomyocyte hypertrophy. Interacts with RCAN1. Interacts with SPATA33 (via PQIIIT motif).

The protein localises to the cytoplasm. Its subcellular location is the cytosol. The protein resides in the cell membrane. It is found in the sarcolemma. In terms of biological role, regulatory subunit of calcineurin, a calcium-dependent, calmodulin stimulated protein phosphatase. Confers calcium sensitivity. The polypeptide is Calcineurin subunit B type 1 (PPP3R1) (Bos taurus (Bovine)).